The primary structure comprises 177 residues: Disulfide bond formation protein B (177 aa).

Over 1-14 the chain is Cytoplasmic; the sequence is MLALLKQFSEKRFV. Residues 15–31 form a helical membrane-spanning segment; the sequence is WFLLAFSSLALESTALY. Residues 32–49 are Periplasmic-facing; the sequence is FQYGMGLQPCVLCVYERL. Cysteines 41 and 44 form a disulfide. A helical transmembrane segment spans residues 50–65; sequence AMIGLFVAGTIALLQP. The Cytoplasmic portion of the chain corresponds to 66-72; the sequence is RVFILRL. The helical transmembrane segment at 73 to 90 threads the bilayer; it reads IALALGLFSSIKGLLISF. The Periplasmic segment spans residues 91–145; sequence RHLDLQMNPAPWKQCEFIPNFPETLPFHQWFPFIFNPTGSCNESQWSLFGLTMVQ. Cysteines 105 and 131 form a disulfide. Residues 146 to 164 form a helical membrane-spanning segment; sequence WLVVIFSLYVVILTLLLIA. Topologically, residues 165 to 177 are cytoplasmic; sequence QVIKTRKQRRLFN.

The protein belongs to the DsbB family.

The protein localises to the cell inner membrane. In terms of biological role, required for disulfide bond formation in some periplasmic proteins. Acts by oxidizing the DsbA protein. This Haemophilus influenzae (strain ATCC 51907 / DSM 11121 / KW20 / Rd) protein is Disulfide bond formation protein B.